The chain runs to 238 residues: Orotidine 5'-phosphate decarboxylase (238 aa).

Substrate contacts are provided by residues aspartate 18, lysine 40, 67 to 76, threonine 122, arginine 183, glutamine 192, and arginine 213; that span reads DMKLLDIDNT. Residue lysine 69 is the Proton donor of the active site.

Belongs to the OMP decarboxylase family. Type 1 subfamily. In terms of assembly, homodimer.

The enzyme catalyses orotidine 5'-phosphate + H(+) = UMP + CO2. The protein operates within pyrimidine metabolism; UMP biosynthesis via de novo pathway; UMP from orotate: step 2/2. Functionally, catalyzes the decarboxylation of orotidine 5'-monophosphate (OMP) to uridine 5'-monophosphate (UMP). This chain is Orotidine 5'-phosphate decarboxylase, found in Brucella abortus (strain S19).